The following is a 423-amino-acid chain: F-box/LRR-repeat protein 2 (423 aa).

The region spanning 9-55 (GLINKKLPKELLLRIFSFLDIVTLCRCAQISKAWNILALDGSNWQRI) is the F-box domain. 13 LRR repeats span residues 61-87 (QTDV…SLRG), 88-113 (CIGV…NLNG), 114-139 (CTKI…DLTS), 140-165 (CVSI…NLSW), 166-191 (CDQI…LLRG), 192-217 (CTQL…NLQS), 218-243 (CSRI…CLSG), 244-269 (CSNL…EAAR), 270-295 (CSHL…DLEE), 296-321 (CILI…SLSH), 322-350 (CELI…ELDN), 351-375 (CLLI…ELYD), and 376-401 (CQQV…AYFA). The segment at 80-90 (LRKLSLRGCIG) is interaction with Calmodulin. Lys-201 participates in a covalent cross-link: Glycyl lysine isopeptide (Lys-Gly) (interchain with G-Cter in ubiquitin). Phosphothreonine is present on Thr-404. Cys-420 carries the S-geranylgeranyl cysteine lipid modification. Residues 420 to 423 (CVIL) carry the CAAX motif motif.

As to quaternary structure, part of the SCF (SKP1-CUL1-F-box) E3 ubiquitin-protein ligase complex SCF(FBXL2) composed of CUL1, SKP1, RBX1 and FBXL2. Interacts with calmodulin; may antagonize substrate ubiquitination by SCF(FBXL2). May interact with PIK3R1. Interacts with PTPN13. (Microbial infection) Interacts with hepatitis C virus non-structural protein 5A (NS5A) and less efficiently, with hepatitis C virus non-structural protein 5B (NS5B); a reaction crucial for hepatitis C virus RNA replication. Post-translationally, phosphorylated by GSK-beta (GSK3B), promoting recognition by FBXO3, leading to its ubiquitination by the SCF(FBXO3) complex. In terms of processing, ubiquitinated at Lys-201 by the SCF(FBXO3) complex in response to lipopolysaccharide (LPS), leading to its degradation by the proteasome. In terms of tissue distribution, expressed in brain, heart, kidney, liver, lung, pancreas and placenta.

The protein localises to the membrane. It participates in protein modification; protein ubiquitination. In terms of biological role, calcium-activated substrate recognition component of the SCF (SKP1-cullin-F-box protein) E3 ubiquitin-protein ligase complex, SCF(FBXL2), which mediates the ubiquitination and subsequent proteasomal degradation of target proteins. Unlike many F-box proteins, FBXL2 does not seem to target phosphodegron within its substrates but rather calmodulin-binding motifs and is thereby antagonized by calmodulin. This is the case for the cyclins CCND2 and CCND3 which polyubiquitination and subsequent degradation are inhibited by calmodulin. Through CCND2 and CCND3 degradation induces cell-cycle arrest in G(0). SCF(FBXL2) also mediates PIK3R2 ubiquitination and proteasomal degradation thereby regulating phosphatidylinositol 3-kinase signaling and autophagy. PCYT1A monoubiquitination by SCF(FBXL2) and subsequent degradation regulates synthesis of phosphatidylcholine, which is utilized for formation of membranes and of pulmonary surfactant. The SCF(FBXL2) complex acts as a regulator of inflammation by mediating ubiquitination and degradation of TRAF proteins (TRAF1, TRAF2, TRAF3, TRAF4, TRAF5 and TRAF6). The SCF(FBXL2) complex acts as a negative regulator of the NLRP3 inflammasome by mediating ubiquitination and degradation of NLRP3. This Homo sapiens (Human) protein is F-box/LRR-repeat protein 2.